We begin with the raw amino-acid sequence, 494 residues long: Integrin beta-like protein 1 (494 aa).

The signal sequence occupies residues 1–23 (MRPPGFRNFLLLASSLLFAGLSA). Disulfide bonds link C40-C71, C51-C69, C63-C74, C76-C89, C91-C112, C96-C110, C104-C115, C117-C126, C132-C159, C143-C157, C151-C162, C164-C178, C180-C202, C185-C200, C194-C205, C207-C216, C220-C247, C231-C245, C239-C250, C252-C269, C271-C296, C276-C294, C288-C299, C301-C310, C316-C343, C327-C341, C335-C346, C348-C361, C363-C384, C368-C382, C376-C387, C389-C398, C404-C431, C415-C429, C423-C434, C436-C448, C450-C471, C455-C469, C463-C474, and C476-C485. 10 consecutive I-EGF domains span residues 40–90 (CRLS…PLCE), 91–127 (CHEWVCETYDGSTCAGHGKCDCGKCKCDQGWYGDACQ), 132–179 (CDLT…KFCE), 180–217 (CDDRECIDDETEEICGGHGKCYCGNCYCKAGWHGDKCE), 220–270 (CDIT…DTCE), 271–311 (CDER…KKCE), 316–362 (CTLS…KTCE), 363–399 (CDDRRCEDLDGVVCGGHGTCSCGRCVCERGWFGKLCQ), 404–449 (CNMT…EFCD), and 450–486 (CDDRDCDKHDGLICTGNGICSCGNCECWDGWNGNACE). The stretch at 51 to 95 (CRAPGQPPGAALCHGRGRCDCGVCICHVTEPGMFFGPLCECHEWV) is one I repeat. The cysteine-rich tandem repeats stretch occupies residues 51–494 (CRAPGQPPGA…CEIWLGSEYP (444 aa)). An II repeat occupies 96 to 142 (CETYDGSTCAGHGKCDCGKCKCDQGWYGDACQYPTNCDLTKKKSNQM). The III repeat unit spans residues 143–184 (CKNSQDIICSNAGTCHCGRCKCDNSDGSGLVYGKFCECDDRE). Residues 185–230 (CIDDETEEICGGHGKCYCGNCYCKAGWHGDKCEFQCDITPWESKRR) form an IV repeat. The stretch at 231–275 (CTSPDGKICSNRGTCVCGECTCHDVDPTGDWGDIHGDTCECDERD) is one V repeat. The stretch at 276–326 (CRAVYDRYSDDFCSGHGQCNCGRCDCKAGWYGKKCEHPQSCTLSAEESIRK) is one VI repeat. Residues 327-367 (CQGSSDLPCSGRGKCECGKCTCYPPGDRRVYGKTCECDDRR) form a VII repeat. The stretch at 368-414 (CEDLDGVVCGGHGTCSCGRCVCERGWFGKLCQHPRKCNMTEEQSKNL) is one VIII repeat. N405 carries an N-linked (GlcNAc...) asparagine glycan. Residues 415–454 (CESADGILCSGKGSCHCGKCICSAEEWYISGEFCDCDDRD) form an IX repeat. A X repeat occupies 455-494 (CDKHDGLICTGNGICSCGNCECWDGWNGNACEIWLGSEYP).

Widely expressed in many tissues, but readily detectable only in aorta.

The protein localises to the secreted. This Homo sapiens (Human) protein is Integrin beta-like protein 1 (ITGBL1).